Reading from the N-terminus, the 229-residue chain is Urease accessory protein UreF (229 aa).

The protein belongs to the UreF family. As to quaternary structure, ureD, UreF and UreG form a complex that acts as a GTP-hydrolysis-dependent molecular chaperone, activating the urease apoprotein by helping to assemble the nickel containing metallocenter of UreC. The UreE protein probably delivers the nickel.

The protein resides in the cytoplasm. Required for maturation of urease via the functional incorporation of the urease nickel metallocenter. This chain is Urease accessory protein UreF, found in Methylobacterium radiotolerans (strain ATCC 27329 / DSM 1819 / JCM 2831 / NBRC 15690 / NCIMB 10815 / 0-1).